Here is a 301-residue protein sequence, read N- to C-terminus: uncharacterized protein (301 aa).

Residues Glu-146, Glu-148, and Asp-177 each coordinate a divalent metal cation.

Belongs to the FAH family.

This is an uncharacterized protein from Staphylococcus epidermidis (strain ATCC 12228 / FDA PCI 1200).